The sequence spans 497 residues: Bloodstream-specific protein 2 (497 aa).

The N-terminal stretch at 1-14 (MRAIFLVALALATM) is a signal peptide. Residues 15-124 (RESTAESLKL…IIKYIKANVG (110 aa)) enclose the Thioredoxin 1 domain. Asparagine 30 carries N-linked (GlcNAc...) asparagine glycosylation. Cysteine 48 and cysteine 51 are disulfide-bonded. Residues asparagine 63, asparagine 85, asparagine 153, asparagine 154, asparagine 250, and asparagine 278 are each glycosylated (N-linked (GlcNAc...) asparagine). The 122-residue stretch at 334-455 (EPTIKSLPVP…VYEFVRKHVT (122 aa)) folds into the Thioredoxin 2 domain. Active-site nucleophile residues include cysteine 378 and cysteine 381. Residues cysteine 378 and cysteine 381 are joined by a disulfide bond. N-linked (GlcNAc...) asparagine glycans are attached at residues asparagine 413, asparagine 465, asparagine 476, asparagine 482, asparagine 485, and asparagine 488. The disordered stretch occupies residues 461–497 (EKPANVTEEKKSEEENKSSKSNESNDSNESNVDKQDL). A compositionally biased stretch (basic and acidic residues) spans 467–480 (TEEKKSEEENKSSK). Residues 481 to 490 (SNESNDSNES) show a composition bias toward low complexity.

Belongs to the protein disulfide isomerase family.

In Trypanosoma brucei brucei, this protein is Bloodstream-specific protein 2 (BS2).